Here is a 343-residue protein sequence, read N- to C-terminus: Methionine import ATP-binding protein MetN 3 (343 aa).

An ABC transporter domain is found at 2 to 241; that stretch reads IELSNITKVF…PKTPLAQKFI (240 aa). 38–45 lines the ATP pocket; sequence GASGAGKS.

This sequence belongs to the ABC transporter superfamily. Methionine importer (TC 3.A.1.24) family. The complex is composed of two ATP-binding proteins (MetN), two transmembrane proteins (MetI) and a solute-binding protein (MetQ).

It localises to the cell inner membrane. It carries out the reaction L-methionine(out) + ATP + H2O = L-methionine(in) + ADP + phosphate + H(+). It catalyses the reaction D-methionine(out) + ATP + H2O = D-methionine(in) + ADP + phosphate + H(+). Its function is as follows. Part of the ABC transporter complex MetNIQ involved in methionine import. Responsible for energy coupling to the transport system. The protein is Methionine import ATP-binding protein MetN 3 of Pectobacterium atrosepticum (strain SCRI 1043 / ATCC BAA-672) (Erwinia carotovora subsp. atroseptica).